The sequence spans 72 residues: Translation initiation factor IF-1 (72 aa).

The S1-like domain maps to 1 to 72 (MAKEEMLEFP…TKGRINYRFK (72 aa)).

Belongs to the IF-1 family. As to quaternary structure, component of the 30S ribosomal translation pre-initiation complex which assembles on the 30S ribosome in the order IF-2 and IF-3, IF-1 and N-formylmethionyl-tRNA(fMet); mRNA recruitment can occur at any time during PIC assembly.

It is found in the cytoplasm. One of the essential components for the initiation of protein synthesis. Stabilizes the binding of IF-2 and IF-3 on the 30S subunit to which N-formylmethionyl-tRNA(fMet) subsequently binds. Helps modulate mRNA selection, yielding the 30S pre-initiation complex (PIC). Upon addition of the 50S ribosomal subunit IF-1, IF-2 and IF-3 are released leaving the mature 70S translation initiation complex. This Jannaschia sp. (strain CCS1) protein is Translation initiation factor IF-1.